We begin with the raw amino-acid sequence, 405 residues long: tRNA-specific 2-thiouridylase MnmA (405 aa).

Residues Ala41–Ser48 and Leu67 each bind ATP. Cys135 acts as the Nucleophile in catalysis. A disulfide bridge connects residues Cys135 and Cys231. Position 159 (Gly159) interacts with ATP. The interaction with tRNA stretch occupies residues Lys181–Gln183. Residue Cys231 is the Cysteine persulfide intermediate of the active site.

This sequence belongs to the MnmA/TRMU family.

Its subcellular location is the cytoplasm. The catalysed reaction is S-sulfanyl-L-cysteinyl-[protein] + uridine(34) in tRNA + AH2 + ATP = 2-thiouridine(34) in tRNA + L-cysteinyl-[protein] + A + AMP + diphosphate + H(+). Catalyzes the 2-thiolation of uridine at the wobble position (U34) of tRNA, leading to the formation of s(2)U34. This is tRNA-specific 2-thiouridylase MnmA from Maricaulis maris (strain MCS10) (Caulobacter maris).